A 381-amino-acid chain; its full sequence is Guanine nucleotide-binding protein subunit alpha-12 (381 aa).

Residue C11 is the site of S-palmitoyl cysteine attachment. A G-alpha domain is found at 56–381; it reads RLVKILLLGA…QENLKDIMLQ (326 aa). Residues 59-72 form a G1 motif region; sequence KILLLGAGESGKST. GTP-binding positions include 67 to 72 and 202 to 205; these read ESGKST and LLAR. Residue S71 participates in Mg(2+) binding. The segment at 200-208 is G2 motif; that stretch reads DILLARKAT. T208 contacts Mg(2+). T208 is modified (phosphothreonine). Positions 223–232 are G3 motif; it reads FKMVDVGGQR. The interval 292–299 is G4 motif; it reads ILFLNKMD. GTP contacts are provided by residues 296–299 and A353; that span reads NKMD. The interval 351-356 is G5 motif; it reads TTAIDT.

Belongs to the G-alpha family. G(12) subfamily. As to quaternary structure, g proteins are composed of 3 units; alpha, beta and gamma. The alpha chain contains the guanine nucleotide binding site. Interacts with UBXD5. Interacts (in GTP-bound form) with PPP5C (via TPR repeats); activates PPP5C phosphatase activity and translocates PPP5C to the cell membrane. Interacts with RGS22. Interacts (via N-terminus) with NAPA; the interaction promotes CDH5 localization to plasma membrane. Interacts with CTNND1 (via N-terminus); the interaction regulates CDH1-mediated cell-cell adhesion. Interacts with PPP2R1A; the interaction promotes protein phosphatase 2A activation causing dephosphorylation of MAPT. Interacts (in GTP-bound form) with ARHGEF1. Interacts (in GTP-bound form) with ARHGEF11 (via RGS domain). Interacts (in GTP-bound form) with ARHGEF12 (via RGS domain).

The protein localises to the cell membrane. It localises to the lateral cell membrane. It is found in the cytoplasm. Functionally, guanine nucleotide-binding proteins (G proteins) are involved as modulators or transducers in various transmembrane signaling systems. Activates effector molecule RhoA by binding and activating RhoGEFs (ARHGEF12/LARG). GNA12-dependent Rho signaling subsequently regulates transcription factor AP-1 (activating protein-1). GNA12-dependent Rho signaling also regulates protein phosphatese 2A activation causing dephosphorylation of its target proteins. Promotes tumor cell invasion and metastasis by activating RhoA/ROCK signaling pathway and up-regulating pro-inflammatory cytokine production. Inhibits CDH1-mediated cell adhesion in process independent from Rho activation. Together with NAPA promotes CDH5 localization to plasma membrane. May play a role in the control of cell migration through the TOR signaling cascade. The polypeptide is Guanine nucleotide-binding protein subunit alpha-12 (GNA12) (Homo sapiens (Human)).